We begin with the raw amino-acid sequence, 129 residues long: Glycine cleavage system H protein (129 aa).

The Lipoyl-binding domain maps to 24–106 (LVRVGLSAYA…HGEGWLLVIR (83 aa)). At Lys-65 the chain carries N6-lipoyllysine.

It belongs to the GcvH family. As to quaternary structure, the glycine cleavage system is composed of four proteins: P, T, L and H. Requires (R)-lipoate as cofactor.

Its function is as follows. The glycine cleavage system catalyzes the degradation of glycine. The H protein shuttles the methylamine group of glycine from the P protein to the T protein. This chain is Glycine cleavage system H protein, found in Synechococcus sp. (strain CC9311).